The chain runs to 373 residues: Chaperone protein DnaJ (373 aa).

Residues 5–70 form the J domain; sequence DYYEVLGVNR…QKRAAYDQYG (66 aa). The segment at 133 to 211 adopts a CR-type zinc-finger fold; sequence GTETKIRIPV…CHGGGRVKQH (79 aa). Zn(2+) contacts are provided by C146, C149, C163, C166, C185, C188, C199, and C202. 4 CXXCXGXG motif repeats span residues 146–153, 163–170, 185–192, and 199–206; these read CETCHGSG, CSTCGGHG, CPKCHGSG, and CPTCHGGG. The segment at 346 to 373 is disordered; sequence LEDINQQDSGKHSPREKSWMTKVKDFFQ. A compositionally biased stretch (basic and acidic residues) spans 354–373; the sequence is SGKHSPREKSWMTKVKDFFQ.

Belongs to the DnaJ family. As to quaternary structure, homodimer. The cofactor is Zn(2+).

The protein resides in the cytoplasm. In terms of biological role, participates actively in the response to hyperosmotic and heat shock by preventing the aggregation of stress-denatured proteins and by disaggregating proteins, also in an autonomous, DnaK-independent fashion. Unfolded proteins bind initially to DnaJ; upon interaction with the DnaJ-bound protein, DnaK hydrolyzes its bound ATP, resulting in the formation of a stable complex. GrpE releases ADP from DnaK; ATP binding to DnaK triggers the release of the substrate protein, thus completing the reaction cycle. Several rounds of ATP-dependent interactions between DnaJ, DnaK and GrpE are required for fully efficient folding. Also involved, together with DnaK and GrpE, in the DNA replication of plasmids through activation of initiation proteins. The polypeptide is Chaperone protein DnaJ (Methylobacillus flagellatus (strain ATCC 51484 / DSM 6875 / VKM B-1610 / KT)).